The following is a 487-amino-acid chain: Glutamyl-tRNA(Gln) amidotransferase subunit A (487 aa).

Catalysis depends on charge relay system residues Lys74 and Ser149. Residue Ser173 is the Acyl-ester intermediate of the active site.

It belongs to the amidase family. GatA subfamily. In terms of assembly, heterotrimer of A, B and C subunits.

The catalysed reaction is L-glutamyl-tRNA(Gln) + L-glutamine + ATP + H2O = L-glutaminyl-tRNA(Gln) + L-glutamate + ADP + phosphate + H(+). Its function is as follows. Allows the formation of correctly charged Gln-tRNA(Gln) through the transamidation of misacylated Glu-tRNA(Gln) in organisms which lack glutaminyl-tRNA synthetase. The reaction takes place in the presence of glutamine and ATP through an activated gamma-phospho-Glu-tRNA(Gln). In Prochlorococcus marinus (strain MIT 9211), this protein is Glutamyl-tRNA(Gln) amidotransferase subunit A.